The primary structure comprises 328 residues: Alanine racemase (328 aa).

The active-site Proton acceptor; specific for D-alanine is the lysine 33. An N6-(pyridoxal phosphate)lysine modification is found at lysine 33. Arginine 118 is a substrate binding site. The Proton acceptor; specific for L-alanine role is filled by tyrosine 237. Methionine 283 contributes to the substrate binding site.

This sequence belongs to the alanine racemase family. The cofactor is pyridoxal 5'-phosphate.

The enzyme catalyses L-alanine = D-alanine. Its pathway is amino-acid biosynthesis; D-alanine biosynthesis; D-alanine from L-alanine: step 1/1. Catalyzes the interconversion of L-alanine and D-alanine. May also act on other amino acids. The protein is Alanine racemase (alr) of Campylobacter jejuni subsp. jejuni serotype O:6 (strain 81116 / NCTC 11828).